Here is a 225-residue protein sequence, read N- to C-terminus: Suppressor of cytokine signaling 3 (225 aa).

Positions 22-33 (LKTFSSKSEYQL) are kinase inhibitory region (KIR). Residues 34–45 (VVNAVRKLQESG) are extended SH2 subdomain (ESS). The SH2 domain occupies 46–142 (FYWSAVTGGE…APSFPSPPTE (97 aa)). Positions 131–142 (PGAPSFPSPPTE) are enriched in pro residues. Residues 131–162 (PGAPSFPSPPTEPSSEVPEQPSAQPLPGSPPR) form a disordered region. The span at 143–155 (PSSEVPEQPSAQP) shows a compositional bias: low complexity. An SOCS box domain is found at 177-224 (VLSRPLSSNVATLQHLCRKTVNGHLDSYEKVTQLPGPIREFLDQYDAP).

Interacts with multiple activated proteins of the tyrosine kinase signaling pathway including IGF1 receptor, insulin receptor and JAK2. Binding to JAK2 is mediated through the KIR and SH2 domains to a phosphorylated tyrosine residue within the JAK2 JH1 domain. Binds specific activated tyrosine residues of the leptin, EPO, IL12, GSCF and gp130 receptors. Interaction with CSNK1E stabilizes SOCS3 protein. Component of the probable ECS(SOCS3) E3 ubiquitin-protein ligase complex which contains CUL5, RNF7/RBX2, Elongin BC complex and SOCS3. Interacts with CUL5, RNF7, ELOB and ELOC. Interacts with CUL2. Interacts with FGFR3. Interacts with INSR. Interacts with BCL10; this interaction may interfere with BCL10-binding with PELI2. Interacts with NOD2 (via CARD domain); the interaction promotes NOD2 degradation. Phosphorylated on tyrosine residues after stimulation by the cytokines, IL-2, EPO or IGF1. As to expression, widely expressed with high expression in heart, placenta, skeletal muscle, peripheral blood leukocytes, fetal and adult lung, and fetal liver and kidney. Lower levels in thymus.

It functions in the pathway protein modification; protein ubiquitination. In terms of biological role, SOCS family proteins form part of a classical negative feedback system that regulates cytokine signal transduction. SOCS3 is involved in negative regulation of cytokines that signal through the JAK/STAT pathway. Inhibits cytokine signal transduction by binding to tyrosine kinase receptors including IL6ST/gp130, LIF, erythropoietin, insulin, IL12, GCSF and leptin receptors. Binding to JAK2 inhibits its kinase activity and regulates IL6 signaling. Suppresses fetal liver erythropoiesis. Regulates onset and maintenance of allergic responses mediated by T-helper type 2 cells. Probable substrate recognition component of a SCF-like ECS (Elongin BC-CUL2/5-SOCS-box protein) E3 ubiquitin-protein ligase complex which mediates the ubiquitination and subsequent proteasomal degradation of target proteins. This chain is Suppressor of cytokine signaling 3, found in Homo sapiens (Human).